We begin with the raw amino-acid sequence, 75 residues long: Small ribosomal subunit protein bS18 (75 aa).

The protein belongs to the bacterial ribosomal protein bS18 family. In terms of assembly, part of the 30S ribosomal subunit. Forms a tight heterodimer with protein bS6.

Binds as a heterodimer with protein bS6 to the central domain of the 16S rRNA, where it helps stabilize the platform of the 30S subunit. The polypeptide is Small ribosomal subunit protein bS18 (Clostridioides difficile (strain 630) (Peptoclostridium difficile)).